We begin with the raw amino-acid sequence, 121 residues long: Probable V-type proton ATPase subunit F (121 aa).

This sequence belongs to the V-ATPase F subunit family. V-ATPase is a heteromultimeric enzyme made up of two complexes: the ATP-hydrolytic V1 complex and the proton translocation V0 complex. The V1 complex consists of three catalytic AB heterodimers that form a heterohexamer, three peripheral stalks each consisting of EG heterodimers, one central rotor including subunits D and F, and the regulatory subunits C and H. The proton translocation complex V0 consists of the proton transport subunit a, a ring of proteolipid subunits c9c'', rotary subunit d, subunits e and f, and the accessory subunits vah-19/Ac45 and vah-20/PRR.

Its function is as follows. Subunit of the V1 complex of vacuolar(H+)-ATPase (V-ATPase), a multisubunit enzyme composed of a peripheral complex (V1) that hydrolyzes ATP and a membrane integral complex (V0) that translocates protons. V-ATPase is responsible for acidifying and maintaining the pH of intracellular compartments and in some cell types, is targeted to the plasma membrane, where it is responsible for acidifying the extracellular environment. Required along with other vacuolar ATPase components for the removal of protein aggregates which form in immature oocytes in the distal gonad. This removal occurs as the oocytes mature and move to the proximal gonad, is triggered by the introduction of sperm through mating and occurs before fertilization. The introduction of sperm triggers V-ATPase accumulation in proximal oocytes and induces lysosomal acidification which leads to engulfing of protein aggregates by lysosomes and subsequent clearance of the aggregates. Lysosomal acidification also leads to changes in mitochondrial morphology and function. Mitochondria in distal immature oocytes are fragmented, produce high levels of reactive oxygen species (ROS) and have high membrane potential, indicative of metabolic inactivity. In contrast, mitochondria in proximal mature oocytes are tubular with lower ROS levels and membrane potential, indicative of an active metabolic state required for aggregate mobilization before clearance. This Caenorhabditis elegans protein is Probable V-type proton ATPase subunit F.